Consider the following 122-residue polypeptide: Large ribosomal subunit protein bL12 (122 aa).

It belongs to the bacterial ribosomal protein bL12 family. In terms of assembly, homodimer. Part of the ribosomal stalk of the 50S ribosomal subunit. Forms a multimeric L10(L12)X complex, where L10 forms an elongated spine to which 2 to 4 L12 dimers bind in a sequential fashion. Binds GTP-bound translation factors.

Its function is as follows. Forms part of the ribosomal stalk which helps the ribosome interact with GTP-bound translation factors. Is thus essential for accurate translation. The sequence is that of Large ribosomal subunit protein bL12 from Shewanella woodyi (strain ATCC 51908 / MS32).